Here is a 335-residue protein sequence, read N- to C-terminus: F420-dependent glucose-6-phosphate dehydrogenase 1 (335 aa).

Aspartate 38 lines the coenzyme F420-(gamma-Glu)n pocket. The Proton donor role is filled by histidine 39. Residues threonine 75 and 106–107 (TG) each bind coenzyme F420-(gamma-Glu)n. Glutamate 108 (proton acceptor) is an active-site residue. Coenzyme F420-(gamma-Glu)n contacts are provided by residues asparagine 111, 176–177 (GG), and 179–180 (VV). Substrate-binding residues include threonine 194, lysine 197, lysine 258, and arginine 282.

Belongs to the F420-dependent glucose-6-phosphate dehydrogenase family. Homodimer.

The enzyme catalyses oxidized coenzyme F420-(gamma-L-Glu)(n) + D-glucose 6-phosphate + H(+) = 6-phospho-D-glucono-1,5-lactone + reduced coenzyme F420-(gamma-L-Glu)(n). Functionally, catalyzes the coenzyme F420-dependent oxidation of glucose 6-phosphate (G6P) to 6-phosphogluconolactone. In Rhodococcus jostii (strain RHA1), this protein is F420-dependent glucose-6-phosphate dehydrogenase 1.